The chain runs to 475 residues: Ankyrin repeat, SAM and basic leucine zipper domain-containing protein 1 (475 aa).

3 positions are modified to phosphoserine: Ser-17, Ser-18, and Ser-20. ANK repeat units lie at residues 45-74 (EKNE…SVES), 78-107 (YGWT…NASF), 110-144 (DKQT…DPNV), 148-177 (RLMT…EVNS), 181-210 (NGYT…NKML), and 214-243 (DGKT…PLEG). An SAM domain is found at 272-334 (SYTAFGDLEI…KILAALKELE (63 aa)).

In terms of assembly, interacts with DDX4, PIWIL1, RANBP9 and TDRD1.

The protein localises to the cytoplasm. Its function is as follows. Plays a central role during spermatogenesis by repressing transposable elements and preventing their mobilization, which is essential for the germline integrity. Acts via the piRNA metabolic process, which mediates the repression of transposable elements during meiosis by forming complexes composed of piRNAs and Piwi proteins and governs the methylation and subsequent repression of transposons. Its association with pi-bodies suggests a participation in the primary piRNAs metabolic process. Required prior to the pachytene stage to facilitate the production of multiple types of piRNAs, including those associated with repeats involved in the regulation of retrotransposons. May act by mediating protein-protein interactions during germ cell maturation. This chain is Ankyrin repeat, SAM and basic leucine zipper domain-containing protein 1 (ASZ1), found in Mustela putorius furo (European domestic ferret).